Reading from the N-terminus, the 509-residue chain is Zinc finger CCCH-type with G patch domain-containing protein (509 aa).

The segment at 155–178 adopts a C3H1-type zinc-finger fold; it reads PCNYYLEGECRFDEIRCRYSHGAL. Residues 254 to 277 form a disordered region; the sequence is EDELTSEDSSSSPHDESSDEIDSD. The 47-residue stretch at 310–356 folds into the G-patch domain; it reads TRGIGSKLMEKMGYIHGTGLGSEGRGIVTPVSAQILPQGRSLDACME. The segment at 407-430 is disordered; it reads LGGGESRHQGDQAAKKAKTNDLQQ. The span at 411 to 420 shows a compositional bias: basic and acidic residues; the sequence is ESRHQGDQAA.

The protein resides in the nucleus. Functionally, transcription repressor. The polypeptide is Zinc finger CCCH-type with G patch domain-containing protein (Drosophila pseudoobscura pseudoobscura (Fruit fly)).